Reading from the N-terminus, the 669-residue chain is NAD-dependent malic enzyme, mitochondrial (669 aa).

Over residues 33–43 (IQQSRLYSSNT) the composition is skewed to polar residues. The interval 33–68 (IQQSRLYSSNTRSHKATTTRENTFQKPYSDEEVTKT) is disordered. A fumarate-binding site is contributed by arginine 142. Tyrosine 187 serves as the catalytic Proton donor. The active-site Proton acceptor is the lysine 259. Residues glutamate 330, aspartate 331, and aspartate 354 each contribute to the a divalent metal cation site. NAD(+) is bound by residues alanine 387 and alanine 390. The (S)-malate site is built by asparagine 499 and asparagine 539.

This sequence belongs to the malic enzymes family. The cofactor is Mg(2+). Requires Mn(2+) as cofactor.

It is found in the mitochondrion matrix. It catalyses the reaction (S)-malate + NAD(+) = pyruvate + CO2 + NADH. The enzyme catalyses oxaloacetate + H(+) = pyruvate + CO2. Its function is as follows. NAD-dependent mitochondrial malic enzyme that catalyzes the oxidative decarboxylation of malate to pyruvate. The protein is NAD-dependent malic enzyme, mitochondrial (MAE1) of Saccharomyces cerevisiae (strain ATCC 204508 / S288c) (Baker's yeast).